We begin with the raw amino-acid sequence, 452 residues long: Exodeoxyribonuclease 7 large subunit (452 aa).

Belongs to the XseA family. Heterooligomer composed of large and small subunits.

The protein localises to the cytoplasm. The catalysed reaction is Exonucleolytic cleavage in either 5'- to 3'- or 3'- to 5'-direction to yield nucleoside 5'-phosphates.. Functionally, bidirectionally degrades single-stranded DNA into large acid-insoluble oligonucleotides, which are then degraded further into small acid-soluble oligonucleotides. The sequence is that of Exodeoxyribonuclease 7 large subunit from Bacillus anthracis (strain A0248).